Reading from the N-terminus, the 308-residue chain is tRNA pseudouridine synthase B (308 aa).

Aspartate 46 acts as the Nucleophile in catalysis.

The protein belongs to the pseudouridine synthase TruB family. Type 1 subfamily.

It carries out the reaction uridine(55) in tRNA = pseudouridine(55) in tRNA. Its function is as follows. Responsible for synthesis of pseudouridine from uracil-55 in the psi GC loop of transfer RNAs. This Marinomonas sp. (strain MWYL1) protein is tRNA pseudouridine synthase B.